A 157-amino-acid chain; its full sequence is N5-carboxyaminoimidazole ribonucleotide mutase (157 aa).

The substrate site is built by Ser-8, Asp-11, and Arg-38.

It belongs to the AIR carboxylase family. Class I subfamily.

The catalysed reaction is 5-carboxyamino-1-(5-phospho-D-ribosyl)imidazole + H(+) = 5-amino-1-(5-phospho-D-ribosyl)imidazole-4-carboxylate. Its pathway is purine metabolism; IMP biosynthesis via de novo pathway; 5-amino-1-(5-phospho-D-ribosyl)imidazole-4-carboxylate from 5-amino-1-(5-phospho-D-ribosyl)imidazole (N5-CAIR route): step 2/2. In terms of biological role, catalyzes the conversion of N5-carboxyaminoimidazole ribonucleotide (N5-CAIR) to 4-carboxy-5-aminoimidazole ribonucleotide (CAIR). In Methanocaldococcus jannaschii (strain ATCC 43067 / DSM 2661 / JAL-1 / JCM 10045 / NBRC 100440) (Methanococcus jannaschii), this protein is N5-carboxyaminoimidazole ribonucleotide mutase.